A 346-amino-acid chain; its full sequence is Alkylated DNA repair protein ALKBH8 homolog (346 aa).

The segment at 1 to 21 (MVQPRFVRPTQSSPSSISGEP) is disordered. Positions 12–21 (SSPSSISGEP) are enriched in low complexity. One can recognise an RRM domain in the interval 24–102 (SNLYVANCGP…RSLHIRYSVL (79 aa)). Positions 208–328 (NLDQLTVNEY…RVSFTLRKVR (121 aa)) constitute a Fe2OG dioxygenase domain. The Fe cation site is built by His-226, Asp-228, and His-298. 2-oxoglutarate is bound by residues Arg-319 and Arg-325.

Belongs to the alkB family. It depends on Fe(2+) as a cofactor.

Its function is as follows. Binds tRNA and catalyzes the iron and alpha-ketoglutarate dependent hydroxylation of 5-methylcarboxymethyl uridine at the wobble position of the anticodon loop in tRNA via its dioxygenase domain, giving rise to 5-(S)-methoxycarbonylhydroxymethyluridine. This is Alkylated DNA repair protein ALKBH8 homolog from Arabidopsis thaliana (Mouse-ear cress).